A 104-amino-acid chain; its full sequence is L-rhamnose mutarotase (104 aa).

Residue tyrosine 18 coordinates substrate. Catalysis depends on histidine 22, which acts as the Proton donor. Substrate-binding positions include tyrosine 41 and 76–77; that span reads WW.

The protein belongs to the rhamnose mutarotase family. In terms of assembly, homodimer.

The protein localises to the cytoplasm. It carries out the reaction alpha-L-rhamnose = beta-L-rhamnose. Its pathway is carbohydrate metabolism; L-rhamnose metabolism. Functionally, involved in the anomeric conversion of L-rhamnose. The chain is L-rhamnose mutarotase from Shigella dysenteriae serotype 1 (strain Sd197).